A 308-amino-acid polypeptide reads, in one-letter code: Isoflavone reductase homolog (308 aa).

NADP(+) is bound by residues 11–17 (GGTGYIG), Arg-36, and Lys-45. Lys-133 serves as the catalytic Proton acceptor. Arg-137 contributes to the NADP(+) binding site.

It belongs to the NmrA-type oxidoreductase family. Isoflavone reductase subfamily.

The protein resides in the cytoplasm. This Solanum tuberosum (Potato) protein is Isoflavone reductase homolog.